Reading from the N-terminus, the 571-residue chain is Potassium-transporting ATPase potassium-binding subunit (571 aa).

The next 12 helical transmembrane spans lie at 5 to 25, 64 to 84, 136 to 156, 179 to 199, 220 to 240, 254 to 274, 285 to 305, 330 to 350, 375 to 395, 421 to 441, 488 to 508, and 527 to 547; these read GWMQ…PLGG, LAYA…LYAL, GLTH…VALI, LYVL…QGMP, VGPV…GGFF, LSNF…TNVF, WAIL…TYWA, FGIA…CGAV, IIGG…VAIF, MLGI…ATVV, LAIG…AIAG, and GGLF…LTFF.

This sequence belongs to the KdpA family. As to quaternary structure, the system is composed of three essential subunits: KdpA, KdpB and KdpC.

It is found in the cell inner membrane. Functionally, part of the high-affinity ATP-driven potassium transport (or Kdp) system, which catalyzes the hydrolysis of ATP coupled with the electrogenic transport of potassium into the cytoplasm. This subunit binds the periplasmic potassium ions and delivers the ions to the membrane domain of KdpB through an intramembrane tunnel. The sequence is that of Potassium-transporting ATPase potassium-binding subunit from Methylorubrum extorquens (strain CM4 / NCIMB 13688) (Methylobacterium extorquens).